Reading from the N-terminus, the 450-residue chain is Bifunctional apoptosis regulator (450 aa).

The segment covering 1–20 (MEEPQKNDLSMREQEEEHPV) has biased composition (basic and acidic residues). The disordered stretch occupies residues 1 to 25 (MEEPQKNDLSMREQEEEHPVRSSGP). Over 1-140 (MEEPQKNDLS…PSTGRVNPQR (140 aa)) the chain is Cytoplasmic. An RING-type zinc finger spans residues 34–74 (CHCCYDTLVNPTTLNCGHSFCRHCLALWWMSSKKTECPECR). A helical membrane pass occupies residues 141–161 (GGGFFSGVLTALTGVAVILLV). The Extracellular segment spans residues 162 to 331 (YHWRSRESEH…REPTWKQWRE (170 aa)). An SAM domain is found at 182-249 (WTMEEVVLWL…LTELERVRAL (68 aa)). N-linked (GlcNAc...) asparagine glycans are attached at residues Asn232 and Asn308. A helical transmembrane segment spans residues 332-352 (FLVKYSFLPYQLIAEFAWDWL). The Cytoplasmic portion of the chain corresponds to 353-360 (EVHYWTSR). Residues 361–381 (FLIVNAVLLSVLELFSFWRIW) form a helical membrane-spanning segment. Over 382–404 (SRSELKTVPQRMWSHFWKVSTQG) the chain is Extracellular. Residues 405–425 (LFMAMFWPLIPQFVCNCLFYW) form a helical membrane-spanning segment. Residues 426-450 (ALYFNPIINIDLVVKEVRRLETQVL) lie on the Cytoplasmic side of the membrane.

In terms of assembly, interacts with CASP8, BCL2 and BCL2L1 through SAM domain and also with HIP1, IFT57, ESRRBL1 and BCAP31. Interacts with NGFR; this interaction inhibits NF-kappa-B and JNK-related signaling pathways. Post-translationally, mediates RING-dependent self-ubiquitination leading to proteasomal degradation.

The protein localises to the endoplasmic reticulum membrane. The catalysed reaction is S-ubiquitinyl-[E2 ubiquitin-conjugating enzyme]-L-cysteine + [acceptor protein]-L-lysine = [E2 ubiquitin-conjugating enzyme]-L-cysteine + N(6)-ubiquitinyl-[acceptor protein]-L-lysine.. Functionally, membrane-bound E3 ubiquitin ligase that plays a role in several processes including apoptosis regulation or reticulum endoplasmic stress. Has anti-apoptotic activity, both for apoptosis triggered via death-receptors and via mitochondrial factors. Contributes to the dynamic control of IRE1/ERN1 signaling during ER stress by inducing BAX inhibitor 1/TMBIM6 proteasomal degradation. Promotes the activation of TGF-beta signaling by mediating the 'Lys-63'-linked ubiquitination of TGFBR1 which is critical to activate the pathway. Together with NGFR, negatively regulates NF-kappa-B and JNK-related signaling pathways. Promotes the proteasome-mediated degradation of PNPLA3, a protein involveld in lipid metabolism. The sequence is that of Bifunctional apoptosis regulator (Bfar) from Mus musculus (Mouse).